A 1002-amino-acid chain; its full sequence is Lon protease homolog, mitochondrial (1002 aa).

Residues 102-313 enclose the Lon N-terminal domain; it reads VIALPLPHRP…LTLELVKKEM (212 aa). Position 468 to 475 (468 to 475) interacts with ATP; that stretch reads GPPGVGKT. The Lon proteolytic domain occupies 811-995; that stretch reads QTPVGVVMGL…NEIFDIAFQS (185 aa). Active-site residues include Ser-901 and Lys-944.

The protein belongs to the peptidase S16 family. In terms of assembly, homohexamer or homoheptamer. Organized in a ring with a central cavity.

It localises to the mitochondrion matrix. It carries out the reaction Hydrolysis of proteins in presence of ATP.. Functionally, ATP-dependent serine protease that mediates the selective degradation of misfolded, unassembled or oxidatively damaged polypeptides as well as certain short-lived regulatory proteins in the mitochondrial matrix. May also have a chaperone function in the assembly of inner membrane protein complexes. Participates in the regulation of mitochondrial gene expression and in the maintenance of the integrity of the mitochondrial genome. Binds to mitochondrial DNA in a site-specific manner. This Oryza sativa subsp. japonica (Rice) protein is Lon protease homolog, mitochondrial.